The following is a 444-amino-acid chain: Acetyl-CoA--deacetylcephalosporin C acetyltransferase (444 aa).

A propeptide spanning residues 1-71 (MLPSAQVARL…PQIANRFEAS (71 aa)) is cleaved from the precursor. The AB hydrolase-1 domain maps to 112–425 (VIVCHTLTSS…DTNEGHDFFV (314 aa)). Catalysis depends on residues Ser208 and His421.

The protein belongs to the AB hydrolase superfamily. MetX family. Heterodimer of chain I and chain II.

The catalysed reaction is deacetylcephalosporin C + acetyl-CoA = cephalosporin C + CoA. The protein operates within antibiotic biosynthesis; cephalosporin C biosynthesis. Its function is as follows. Catalyzes the conversion of deacetylcephalosporin C to cephalosporin C. This chain is Acetyl-CoA--deacetylcephalosporin C acetyltransferase (CEFG), found in Hapsidospora chrysogena (Acremonium chrysogenum).